The primary structure comprises 475 residues: Ankyrin repeat, SAM and basic leucine zipper domain-containing protein 1 (475 aa).

Residues 1 to 24 (MAAGTVRGLAVAGGGESSESEDDG) form a disordered region. Phosphoserine is present on residues S17, S18, and S20. 6 ANK repeats span residues 45–74 (EKNE…SVDS), 78–107 (YGWT…NASF), 110–144 (DKQT…DPNV), 148–177 (RLMT…EVNA), 181–210 (NGYT…NKML), and 214–243 (DGKT…PLEG). Positions 272–334 (SYTAFGDLEI…KILAALKELE (63 aa)) constitute an SAM domain.

As to quaternary structure, interacts with DDX4, PIWIL1, RANBP9 and TDRD1.

The protein localises to the cytoplasm. Plays a central role during spermatogenesis by repressing transposable elements and preventing their mobilization, which is essential for the germline integrity. Acts via the piRNA metabolic process, which mediates the repression of transposable elements during meiosis by forming complexes composed of piRNAs and Piwi proteins and governs the methylation and subsequent repression of transposons. Its association with pi-bodies suggests a participation in the primary piRNAs metabolic process. Required prior to the pachytene stage to facilitate the production of multiple types of piRNAs, including those associated with repeats involved in the regulation of retrotransposons. May act by mediating protein-protein interactions during germ cell maturation. The protein is Ankyrin repeat, SAM and basic leucine zipper domain-containing protein 1 (ASZ1) of Neofelis nebulosa (Clouded leopard).